The chain runs to 246 residues: Small ribosomal subunit protein uS2 (246 aa).

Belongs to the universal ribosomal protein uS2 family.

This chain is Small ribosomal subunit protein uS2, found in Pseudomonas aeruginosa (strain LESB58).